A 490-amino-acid chain; its full sequence is Bifunctional IPC transferase and DIPP synthase (490 aa).

The segment at 72 to 290 (LMKAVILAAG…RANRALVSAA (219 aa)) is mobA-like NTP transferase. CTP-binding positions include 78 to 80 (LAA), Lys-91, Asp-144, and Glu-180. Mg(2+) is bound at residue Glu-180. Residues 291–490 (VKGSGDGFIS…VTLLAVLVSK (200 aa)) form a CDP-alcohol phosphatidyltransferases region. 4 consecutive transmembrane segments (helical) span residues 329–349 (FLVG…AGLL), 389–409 (FLAI…FAIF), 447–467 (IFLI…IFWM), and 468–488 (FLFV…AVLV).

The protein in the N-terminal section; belongs to the MobA family. In the C-terminal section; belongs to the CDP-alcohol phosphatidyltransferase class-I family. In terms of assembly, forms a mixture of monomers and dimers in solution, with prevalence of the monomeric form. The cofactor is Mg(2+).

The protein localises to the membrane. The catalysed reaction is 1D-myo-inositol 3-phosphate + CTP + H(+) = CDP-1L-myo-inositol + diphosphate. It carries out the reaction CDP-1L-myo-inositol + 1D-myo-inositol 3-phosphate = bis(1L-myo-inositol) 3,1'-phosphate 1-phosphate + CMP + H(+). Functionally, involved in biosynthesis of di-myo-inositol phosphate (DIP), a widespread organic solute in microorganisms adapted to hot environments. Catalyzes the condensation of CTP and L-myo-inositol-1-phosphate into CDP-L-myo-inositol, as well as the biosynthesis of di-myo-inositol-1,3'-phosphate-1'-phosphate (DIPP) from CDP-L-myo-inositol and L-myo-inositol-1-phosphate. The cytidylyltransferase is absolutely specific for CTP and L-myo-inositol-1-P. The DIPP synthase uses only L-myoinositol-1-phosphate as an alcohol acceptor, but CDP-glycerol, as well as CDP-L-myo-inositol and CDP-D-myoinositol, are recognized as alcohol donors. This is Bifunctional IPC transferase and DIPP synthase from Archaeoglobus fulgidus (strain ATCC 49558 / DSM 4304 / JCM 9628 / NBRC 100126 / VC-16).